An 81-amino-acid chain; its full sequence is Putative membrane protein insertion efficiency factor (81 aa).

The protein belongs to the UPF0161 family.

The protein resides in the cell membrane. Functionally, could be involved in insertion of integral membrane proteins into the membrane. This is Putative membrane protein insertion efficiency factor from Geobacillus kaustophilus (strain HTA426).